We begin with the raw amino-acid sequence, 417 residues long: 26S proteasome regulatory subunit RPN14 (417 aa).

WD repeat units follow at residues 134–173 (AHVS…NPRT), 176–215 (GHRA…TIHT), 242–281 (ISTS…QTIQ), 285–325 (KFTC…CPVG), 330–371 (NEGT…PAIE), and 380–416 (SNDD…NLSN).

This sequence belongs to the WD repeat PAAF1/RPN14 family. As to quaternary structure, associates with the 19S proteasome regulatory particle (RP). Interacts directly with RPT5 and RPT6.

The protein localises to the cytoplasm. It is found in the nucleus. Functionally, acts as a regulatory subunit of the 26 proteasome which is involved in the ATP-dependent degradation of ubiquitinated proteins. Is not a genuine component of the 26S proteasome, but an auxiliary factor that interacts with the proteasomal ATPase of 19S regulatory particle (RP). Acts as a chaperone which regulates the highly structured assembly of the 19S regulatory particle. Involved in the substrate specificity of the 26S proteasome and is especially involved in the degradation of ubiquitinated GCN4. May contribute to the stability of the 26S proteasome in some stress conditions. The polypeptide is 26S proteasome regulatory subunit RPN14 (RPN14) (Saccharomyces cerevisiae (strain ATCC 204508 / S288c) (Baker's yeast)).